Reading from the N-terminus, the 190-residue chain is Pyridoxal 5'-phosphate synthase subunit PdxT (190 aa).

46–48 (GES) contributes to the L-glutamine binding site. C78 serves as the catalytic Nucleophile. Residues R108 and 137 to 138 (IR) contribute to the L-glutamine site. Catalysis depends on charge relay system residues H174 and E176.

Belongs to the glutaminase PdxT/SNO family. As to quaternary structure, in the presence of PdxS, forms a dodecamer of heterodimers. Only shows activity in the heterodimer.

The catalysed reaction is aldehydo-D-ribose 5-phosphate + D-glyceraldehyde 3-phosphate + L-glutamine = pyridoxal 5'-phosphate + L-glutamate + phosphate + 3 H2O + H(+). It carries out the reaction L-glutamine + H2O = L-glutamate + NH4(+). Its pathway is cofactor biosynthesis; pyridoxal 5'-phosphate biosynthesis. Functionally, catalyzes the hydrolysis of glutamine to glutamate and ammonia as part of the biosynthesis of pyridoxal 5'-phosphate. The resulting ammonia molecule is channeled to the active site of PdxS. In Herpetosiphon aurantiacus (strain ATCC 23779 / DSM 785 / 114-95), this protein is Pyridoxal 5'-phosphate synthase subunit PdxT.